A 1454-amino-acid chain; its full sequence is Mediator of RNA polymerase II transcription subunit 14 (1454 aa).

Residues 1–34 (MAPVQLENHQLVPPGGGGGGSGGPPSAPAPPPPG) are disordered. Residues 14–23 (PGGGGGGSGG) are compositionally biased toward gly residues. Pro residues predominate over residues 25–34 (PSAPAPPPPG). The LXXLL motif 1 signature appears at 69 to 73 (LTDLL). The interval 188-566 (KQATLHQLNQ…VPNKPTQLSY (379 aa)) is interaction with STAT2. Residues 500-824 (LGQQRCKQSI…TKGSSISIQW (325 aa)) form an interaction with SREBF1 region. Phosphoserine occurs at positions 617 and 986. The interval 973–1167 (ARRRSVNEDD…MPPPRKLPQR (195 aa)) is disordered. Pro residues predominate over residues 1001 to 1011 (QPPPQQQPFPK). Polar residues-rich tracts occupy residues 1024 to 1054 (PPTS…SSPS) and 1092 to 1101 (DPSSPYTMVS). Phosphoserine is present on residues Ser1112, Ser1119, Ser1128, Ser1136, and Ser1144. Residues 1147–1156 (AGTSSQTMPT) are compositionally biased toward polar residues. An LXXLL motif 2 motif is present at residues 1182–1186 (LNILL).

This sequence belongs to the Mediator complex subunit 14 family. In terms of assembly, interacts with GATA1. Component of the Mediator complex, which is composed of MED1, MED4, MED6, MED7, MED8, MED9, MED10, MED11, MED12, MED13, MED13L, MED14, MED15, MED16, MED17, MED18, MED19, MED20, MED21, MED22, MED23, MED24, MED25, MED26, MED27, MED29, MED30, MED31, CCNC, CDK8 and CDC2L6/CDK11. The MED12, MED13, CCNC and CDK8 subunits form a distinct module termed the CDK8 module. Mediator containing the CDK8 module is less active than Mediator lacking this module in supporting transcriptional activation. Individual preparations of the Mediator complex lacking one or more distinct subunits have been variously termed ARC, CRSP, DRIP, PC2, SMCC and TRAP. Interacts with AR, ESR1, SREBF1 and STAT2. Ubiquitous.

The protein resides in the nucleus. In terms of biological role, component of the Mediator complex, a coactivator involved in the regulated transcription of nearly all RNA polymerase II-dependent genes. Mediator functions as a bridge to convey information from gene-specific regulatory proteins to the basal RNA polymerase II transcription machinery. Mediator is recruited to promoters by direct interactions with regulatory proteins and serves as a scaffold for the assembly of a functional preinitiation complex with RNA polymerase II and the general transcription factors. The sequence is that of Mediator of RNA polymerase II transcription subunit 14 (MED14) from Homo sapiens (Human).